Reading from the N-terminus, the 377-residue chain is Leukocyte elastase inhibitor (377 aa).

Met1 carries the post-translational modification N-acetylmethionine.

The protein belongs to the serpin family. Ov-serpin subfamily.

It localises to the cytoplasm. In terms of biological role, regulates the activity of the neutrophil proteases. The polypeptide is Leukocyte elastase inhibitor (serpinb1) (Xenopus laevis (African clawed frog)).